A 500-amino-acid chain; its full sequence is Probable cytosol aminopeptidase (500 aa).

The Mn(2+) site is built by Lys-265 and Asp-270. Lys-277 is an active-site residue. 3 residues coordinate Mn(2+): Asp-288, Asp-347, and Glu-349. Arg-351 is an active-site residue.

This sequence belongs to the peptidase M17 family. Requires Mn(2+) as cofactor.

The protein resides in the cytoplasm. It catalyses the reaction Release of an N-terminal amino acid, Xaa-|-Yaa-, in which Xaa is preferably Leu, but may be other amino acids including Pro although not Arg or Lys, and Yaa may be Pro. Amino acid amides and methyl esters are also readily hydrolyzed, but rates on arylamides are exceedingly low.. The catalysed reaction is Release of an N-terminal amino acid, preferentially leucine, but not glutamic or aspartic acids.. Its function is as follows. Presumably involved in the processing and regular turnover of intracellular proteins. Catalyzes the removal of unsubstituted N-terminal amino acids from various peptides. The sequence is that of Probable cytosol aminopeptidase from Rickettsia massiliae (strain Mtu5).